We begin with the raw amino-acid sequence, 145 residues long: Ribonuclease VapC7 (145 aa).

The 128-residue stretch at 2–129 folds into the PINc domain; it reads IVLDTTVLVY…PAFADLSDVV (128 aa). Residues aspartate 5 and aspartate 100 each coordinate Mg(2+).

The protein belongs to the PINc/VapC protein family. Requires Mg(2+) as cofactor.

Its function is as follows. Toxic component of a type II toxin-antitoxin (TA) system. An RNase. The cognate antitoxin is VapB7. This is Ribonuclease VapC7 from Mycobacterium tuberculosis (strain ATCC 25618 / H37Rv).